The sequence spans 313 residues: MSHSVIKVSASAMEQMKQSYAGSLTPAVPQGAVFQAKPPGCTITAYRSGKVLFQGKNAGTEAARWGTAEAPKAKKTVKKAADPLYAPPAGIASMSVIGSDEVGTGDYFGPITVACAYADKTKLSLMKELGVKDSKDLKDPQIIEIAKLLIKTIPYSLLVLKNEKYNQMQEKGMSQGKMKALLHNQAISNLLRKMNGVKPEAILIDQFAEPGIYFKHLSGRDIVKEKTFFSTKAESIHLSVAAASIIARYSFLIEMDKLSREAGMTIPKGAGPHVDEAAAKLIINKGEGALRTFTKLHFANTQKAKRLVERKRS.

Positions 94-310 (MSVIGSDEVG…TQKAKRLVER (217 aa)) constitute an RNase H type-2 domain. A divalent metal cation is bound by residues D100, E101, and D205.

The protein belongs to the RNase HII family. RnhC subfamily. Mn(2+) is required as a cofactor. It depends on Mg(2+) as a cofactor.

The protein localises to the cytoplasm. It carries out the reaction Endonucleolytic cleavage to 5'-phosphomonoester.. Its function is as follows. Endonuclease that specifically degrades the RNA of RNA-DNA hybrids. This is Ribonuclease HIII from Bacillus velezensis (strain DSM 23117 / BGSC 10A6 / LMG 26770 / FZB42) (Bacillus amyloliquefaciens subsp. plantarum).